We begin with the raw amino-acid sequence, 270 residues long: Phosphatidylglycerol--prolipoprotein diacylglyceryl transferase (270 aa).

7 helical membrane passes run 14–34 (VAFT…ILAL), 60–80 (YFFW…IAIY), 103–123 (FVGI…LATI), 133–153 (LWQL…FGRI), 181–201 (PSQL…LFFY), 209–229 (GELI…CEFF), and 235–255 (GIGF…LMFF). Position 152 (R152) interacts with a 1,2-diacyl-sn-glycero-3-phospho-(1'-sn-glycerol).

This sequence belongs to the Lgt family.

Its subcellular location is the cell inner membrane. The enzyme catalyses L-cysteinyl-[prolipoprotein] + a 1,2-diacyl-sn-glycero-3-phospho-(1'-sn-glycerol) = an S-1,2-diacyl-sn-glyceryl-L-cysteinyl-[prolipoprotein] + sn-glycerol 1-phosphate + H(+). Its pathway is protein modification; lipoprotein biosynthesis (diacylglyceryl transfer). Its function is as follows. Catalyzes the transfer of the diacylglyceryl group from phosphatidylglycerol to the sulfhydryl group of the N-terminal cysteine of a prolipoprotein, the first step in the formation of mature lipoproteins. In Campylobacter curvus (strain 525.92), this protein is Phosphatidylglycerol--prolipoprotein diacylglyceryl transferase.